Reading from the N-terminus, the 397-residue chain is MVKETTYYDVLGVKPNATQEELKKAYRKLALKYHPDKNPNEGEKFKQISQAYEVLSDAKKRELYDKGGEQAIKEGGAGGGFGSPMDIFDMFFGGGGRMQRERRGKNVVHQLSVTLEDLYNGATRKLALQKNVICDKCEGRGGKKGAVECCPNCRGTGMQIRIHQIGPGMVQQIQSVCMECQGHGERISPKDRCKSCNGRKIVREKKILEVHIDKGMKDGQKITFHGEGDQEPGLEPGDIIIVLDQKDHAVFTRRGEDLFMCMDIQLVEALCGFQKPISTLDNRTIVITSHPGQIVKHGDIKCVLNEGMPIYRRPYEKGRLIIEFKINFPENGFLSPDKLSLLEKLLPERKEVEETDEMDQVELVDFDPNQERRRHYNGEAYEDDEHHPRGGVQCQTS.

In terms of domain architecture, J spans 6-68 (TYYDVLGVKP…KKRELYDKGG (63 aa)). Position 66 is an N6-acetyllysine (lysine 66). Serine 83 carries the post-translational modification Phosphoserine. The CR-type zinc-finger motif lies at 121 to 205 (GATRKLALQK…CNGRKIVREK (85 aa)). Cysteine 134, cysteine 137, cysteine 150, cysteine 153, cysteine 177, cysteine 180, cysteine 193, and cysteine 196 together coordinate Zn(2+). CXXCXGXG motif repeat units follow at residues 134-141 (CDKCEGRG), 150-157 (CPNCRGTG), 177-184 (CMECQGHG), and 193-200 (CKSCNGRK). Position 335 is a phosphoserine (serine 335). Residues 352–397 (VEETDEMDQVELVDFDPNQERRRHYNGEAYEDDEHHPRGGVQCQTS) are disordered. The segment covering 353–365 (EETDEMDQVELVD) has biased composition (acidic residues). Position 381 is a phosphotyrosine (tyrosine 381). Cysteine 394 is modified (cysteine methyl ester). Cysteine 394 carries S-farnesyl cysteine lipidation. A propeptide spans 395–397 (QTS) (removed in mature form).

In terms of assembly, identified in a complex with HSPA1B and BAX. Interacts with RNF207.

It is found in the membrane. The protein localises to the cytoplasm. It localises to the microsome. The protein resides in the mitochondrion. Its subcellular location is the nucleus. It is found in the perinuclear region. In terms of biological role, co-chaperone for HSPA8/Hsc70. Plays a role in protein transport into mitochondria via its role as co-chaperone. Functions as co-chaperone for HSPA1B and negatively regulates the translocation of BAX from the cytosol to mitochondria in response to cellular stress, thereby protecting cells against apoptosis. Stimulates ATP hydrolysis, but not the folding of unfolded proteins mediated by HSPA1A (in vitro). Promotes apoptosis in response to cellular stress mediated by exposure to anisomycin or UV. This chain is DnaJ homolog subfamily A member 1 (DNAJA1), found in Chlorocebus aethiops (Green monkey).